A 486-amino-acid chain; its full sequence is Serine/threonine-protein kinase 32C (486 aa).

The interval 1 to 56 (MRSGAERRGSSAAASPGSPPPGRARPAGSDAPSALPPPAAGQPRARDSGDVRSQPR) is disordered. Ser10, Ser15, and Ser18 each carry phosphoserine. Residues 24–33 (ARPAGSDAPS) are compositionally biased toward low complexity. In terms of domain architecture, Protein kinase spans 93–353 (FQILRAIGKG…LQDVQAAPAL (261 aa)). Residues 99–107 (IGKGSFGKV) and Lys122 each bind ATP. The active-site Proton acceptor is the Asp216. Residues 396 to 405 (HKKKKRLAKN) show a composition bias toward basic residues. Disordered stretches follow at residues 396-419 (HKKK…QSEN) and 444-486 (SQDL…AGSG).

It belongs to the protein kinase superfamily. Ser/Thr protein kinase family. The cofactor is Mg(2+).

The enzyme catalyses L-seryl-[protein] + ATP = O-phospho-L-seryl-[protein] + ADP + H(+). It carries out the reaction L-threonyl-[protein] + ATP = O-phospho-L-threonyl-[protein] + ADP + H(+). The polypeptide is Serine/threonine-protein kinase 32C (Homo sapiens (Human)).